The following is a 614-amino-acid chain: Dihydroxy-acid dehydratase (614 aa).

Asp-81 contributes to the Mg(2+) binding site. Cys-122 contributes to the [2Fe-2S] cluster binding site. 2 residues coordinate Mg(2+): Asp-123 and Lys-124. The residue at position 124 (Lys-124) is an N6-carboxylysine. Cys-195 is a binding site for [2Fe-2S] cluster. Glu-491 provides a ligand contact to Mg(2+). Catalysis depends on Ser-517, which acts as the Proton acceptor.

It belongs to the IlvD/Edd family. In terms of assembly, homodimer. [2Fe-2S] cluster is required as a cofactor. The cofactor is Mg(2+).

It carries out the reaction (2R)-2,3-dihydroxy-3-methylbutanoate = 3-methyl-2-oxobutanoate + H2O. The catalysed reaction is (2R,3R)-2,3-dihydroxy-3-methylpentanoate = (S)-3-methyl-2-oxopentanoate + H2O. The protein operates within amino-acid biosynthesis; L-isoleucine biosynthesis; L-isoleucine from 2-oxobutanoate: step 3/4. It participates in amino-acid biosynthesis; L-valine biosynthesis; L-valine from pyruvate: step 3/4. Functionally, functions in the biosynthesis of branched-chain amino acids. Catalyzes the dehydration of (2R,3R)-2,3-dihydroxy-3-methylpentanoate (2,3-dihydroxy-3-methylvalerate) into 2-oxo-3-methylpentanoate (2-oxo-3-methylvalerate) and of (2R)-2,3-dihydroxy-3-methylbutanoate (2,3-dihydroxyisovalerate) into 2-oxo-3-methylbutanoate (2-oxoisovalerate), the penultimate precursor to L-isoleucine and L-valine, respectively. The polypeptide is Dihydroxy-acid dehydratase (Actinobacillus succinogenes (strain ATCC 55618 / DSM 22257 / CCUG 43843 / 130Z)).